The chain runs to 365 residues: 2-aminoethylphosphonate--pyruvate transaminase (365 aa).

Lys194 is modified (N6-(pyridoxal phosphate)lysine).

The protein belongs to the class-V pyridoxal-phosphate-dependent aminotransferase family. PhnW subfamily. As to quaternary structure, homodimer. Requires pyridoxal 5'-phosphate as cofactor.

It carries out the reaction (2-aminoethyl)phosphonate + pyruvate = phosphonoacetaldehyde + L-alanine. In terms of biological role, involved in phosphonate degradation. This Bacillus thuringiensis (strain Al Hakam) protein is 2-aminoethylphosphonate--pyruvate transaminase.